Reading from the N-terminus, the 333-residue chain is Anthranilate phosphoribosyltransferase (333 aa).

5-phospho-alpha-D-ribose 1-diphosphate is bound by residues G81, 84–85, T89, 91–94, 109–117, and A121; these read GD, NIST, and KHGNRSVSS. G81 is a binding site for anthranilate. Mg(2+) is bound at residue S93. N112 serves as a coordination point for anthranilate. R167 is an anthranilate binding site. D225 and E226 together coordinate Mg(2+).

It belongs to the anthranilate phosphoribosyltransferase family. Homodimer. Mg(2+) is required as a cofactor.

The enzyme catalyses N-(5-phospho-beta-D-ribosyl)anthranilate + diphosphate = 5-phospho-alpha-D-ribose 1-diphosphate + anthranilate. It functions in the pathway amino-acid biosynthesis; L-tryptophan biosynthesis; L-tryptophan from chorismate: step 2/5. In terms of biological role, catalyzes the transfer of the phosphoribosyl group of 5-phosphorylribose-1-pyrophosphate (PRPP) to anthranilate to yield N-(5'-phosphoribosyl)-anthranilate (PRA). In Pasteurella multocida (strain Pm70), this protein is Anthranilate phosphoribosyltransferase.